Consider the following 117-residue polypeptide: UPF0642 protein C32H8.05 (117 aa).

Positions 39–117 (DQVNDLTKSS…SNFSKFLKKK (79 aa)) are disordered. The span at 93–106 (KWAKKHLKKGKRAK) shows a compositional bias: basic residues. A compositionally biased stretch (low complexity) spans 107–117 (NSNFSKFLKKK).

The protein belongs to the UPF0642 family.

It localises to the nucleus. The protein resides in the nucleolus. The sequence is that of UPF0642 protein C32H8.05 from Schizosaccharomyces pombe (strain 972 / ATCC 24843) (Fission yeast).